Here is a 225-residue protein sequence, read N- to C-terminus: UPF0758 protein Shewmr4_3597 (225 aa).

The 123-residue stretch at 102–224 (VLTNPDLTRD…IVSFAERGWI (123 aa)) folds into the MPN domain. Residues His-173, His-175, and Asp-186 each coordinate Zn(2+). The short motif at 173 to 186 (HNHPSGIAEPSQAD) is the JAMM motif element.

It belongs to the UPF0758 family.

This is UPF0758 protein Shewmr4_3597 from Shewanella sp. (strain MR-4).